Consider the following 99-residue polypeptide: UPF0235 protein ASA_3628 (99 aa).

Belongs to the UPF0235 family.

In Aeromonas salmonicida (strain A449), this protein is UPF0235 protein ASA_3628.